Reading from the N-terminus, the 123-residue chain is Small ribosomal subunit protein uS13 (123 aa).

Positions 95–123 (GLPVRGQRTKTNARTRKGPARTVAGKKKK) are disordered.

Belongs to the universal ribosomal protein uS13 family. As to quaternary structure, part of the 30S ribosomal subunit. Forms a loose heterodimer with protein S19. Forms two bridges to the 50S subunit in the 70S ribosome.

Its function is as follows. Located at the top of the head of the 30S subunit, it contacts several helices of the 16S rRNA. In the 70S ribosome it contacts the 23S rRNA (bridge B1a) and protein L5 of the 50S subunit (bridge B1b), connecting the 2 subunits; these bridges are implicated in subunit movement. Contacts the tRNAs in the A and P-sites. The polypeptide is Small ribosomal subunit protein uS13 (Heliobacterium modesticaldum (strain ATCC 51547 / Ice1)).